The following is a 466-amino-acid chain: Asparagine--tRNA ligase (466 aa).

Belongs to the class-II aminoacyl-tRNA synthetase family. In terms of assembly, homodimer.

It localises to the cytoplasm. The enzyme catalyses tRNA(Asn) + L-asparagine + ATP = L-asparaginyl-tRNA(Asn) + AMP + diphosphate + H(+). The protein is Asparagine--tRNA ligase of Syntrophobacter fumaroxidans (strain DSM 10017 / MPOB).